A 303-amino-acid polypeptide reads, in one-letter code: Biphenyl-2,3-diol 1,2-dioxygenase (303 aa).

2 VOC domains span residues S5–G119 and G143–S264. Fe cation-binding residues include H146, H210, and E260. The disordered stretch occupies residues W283 to E303. Residues S287–E303 are compositionally biased toward basic and acidic residues.

This sequence belongs to the extradiol ring-cleavage dioxygenase family. In terms of assembly, homooctamer. It depends on Fe(2+) as a cofactor.

The enzyme catalyses biphenyl-2,3-diol + O2 = 2-hydroxy-6-oxo-6-phenylhexa-2,4-dienoate + H(+). It functions in the pathway xenobiotic degradation; biphenyl degradation; 2-hydroxy-2,4-pentadienoate and benzoate from biphenyl: step 3/4. The chain is Biphenyl-2,3-diol 1,2-dioxygenase (bphC) from Metapseudomonas furukawaii (Pseudomonas furukawaii).